Reading from the N-terminus, the 386-residue chain is MAAVETRVCETDGCSSEAKLQCPTCIKLGIQGSYFCSQECFKGSWATHKLLHKKAKDEKAKREVSSWTVEGDINTDPWAGYRYTGKLRPHYPLMPTRPVPSYIQRPDYADHPLGMSESEQALKGTSQIKLLSSEDIEGMRLVCRLAREVLDIAAGMIKPGVTTEEIDHAVHLACIARNCYPSPLNYYNFPKSCCTSVNEVICHGIPDRRPLQEGDIVNVDITLYRNGYHGDLNETFFVGEVDDGARKLVQTTYECLMQAIDAVKPGVRYRELGNIIQKHAQANGFSVVRSYCGHGIHKLFHTAPNVPHYAKNKAVGVMKSGHVFTIEPMICEGGWQDETWPDGWTAVTRDGKRSAQFEHTLLVTDTGCEILTRRLDSARPHFMSQF.

A2 is modified (N-acetylalanine). A C6H2-type zinc finger spans residues 6–59; it reads TRVCETDGCSSEAKLQCPTCIKLGIQGSYFCSQECFKGSWATHKLLHKKAKDEK. 8 residues coordinate Zn(2+): C9, C14, C22, C25, C36, C40, H48, and H52. H203 is a binding site for a protein. Zn(2+)-binding residues include D220, D231, and H294. Residue H301 coordinates a protein. Zn(2+) contacts are provided by E327 and E358.

Belongs to the peptidase M24A family. Methionine aminopeptidase type 1 subfamily. Associates with the 60S ribosomal subunit of the 80S translational complex. Zn(2+) is required as a cofactor. The cofactor is Co(2+). It depends on Mn(2+) as a cofactor. Fe(2+) serves as cofactor.

The protein localises to the cytoplasm. It carries out the reaction Release of N-terminal amino acids, preferentially methionine, from peptides and arylamides.. In terms of biological role, cotranslationally removes the N-terminal methionine from nascent proteins. The N-terminal methionine is often cleaved when the second residue in the primary sequence is small and uncharged (Met-Ala-, Cys, Gly, Pro, Ser, Thr, or Val). The sequence is that of Methionine aminopeptidase 1 (METAP1) from Pongo abelii (Sumatran orangutan).